The sequence spans 392 residues: Bifunctional enzyme IspD/IspF (392 aa).

2-C-methyl-D-erythritol 4-phosphate cytidylyltransferase stretches follow at residues 1–234 and 1–235; these read MTES…MMRT and MTES…MRTA. Positions 235–392 are 2-C-methyl-D-erythritol 2,4-cyclodiphosphate synthase; it reads AVGMGYDVHR…AVATIQLPET (158 aa). A divalent metal cation contacts are provided by aspartate 241 and histidine 243. 4-CDP-2-C-methyl-D-erythritol 2-phosphate-binding positions include 241 to 243 and 267 to 268; these read DVH and HS. Residue histidine 275 participates in a divalent metal cation binding. 4-CDP-2-C-methyl-D-erythritol 2-phosphate contacts are provided by residues 289–291, 365–368, phenylalanine 372, and arginine 375; these read DIG and TTTE.

It in the N-terminal section; belongs to the IspD/TarI cytidylyltransferase family. IspD subfamily. In the C-terminal section; belongs to the IspF family. A divalent metal cation is required as a cofactor.

The catalysed reaction is 2-C-methyl-D-erythritol 4-phosphate + CTP + H(+) = 4-CDP-2-C-methyl-D-erythritol + diphosphate. The enzyme catalyses 4-CDP-2-C-methyl-D-erythritol 2-phosphate = 2-C-methyl-D-erythritol 2,4-cyclic diphosphate + CMP. Its pathway is isoprenoid biosynthesis; isopentenyl diphosphate biosynthesis via DXP pathway; isopentenyl diphosphate from 1-deoxy-D-xylulose 5-phosphate: step 2/6. It participates in isoprenoid biosynthesis; isopentenyl diphosphate biosynthesis via DXP pathway; isopentenyl diphosphate from 1-deoxy-D-xylulose 5-phosphate: step 4/6. Bifunctional enzyme that catalyzes the formation of 4-diphosphocytidyl-2-C-methyl-D-erythritol from CTP and 2-C-methyl-D-erythritol 4-phosphate (MEP) (IspD), and catalyzes the conversion of 4-diphosphocytidyl-2-C-methyl-D-erythritol 2-phosphate (CDP-ME2P) to 2-C-methyl-D-erythritol 2,4-cyclodiphosphate (ME-CPP) with a corresponding release of cytidine 5-monophosphate (CMP) (IspF). This is Bifunctional enzyme IspD/IspF from Sphingopyxis alaskensis (strain DSM 13593 / LMG 18877 / RB2256) (Sphingomonas alaskensis).